A 301-amino-acid polypeptide reads, in one-letter code: Nucleotide-binding protein ELI_02120 (301 aa).

An ATP-binding site is contributed by 12 to 19 (GMSGAGKS). 62–65 (DSRT) provides a ligand contact to GTP.

The protein belongs to the RapZ-like family.

Functionally, displays ATPase and GTPase activities. This chain is Nucleotide-binding protein ELI_02120, found in Erythrobacter litoralis (strain HTCC2594).